Consider the following 899-residue polypeptide: MSEVTVKALAEEVGTPIDRLLQQFSDAGISKKAEDNVSQTEKQSLLSHLQKEHGGESTDGTPTRLTLQRKTHSTLSVAGTGGKSKSVQVEVRKKRTFVKRSALEEEQRAADNAKQEAEETAQREAENVAKRKEDVRLAEEKAKRDEENKAKRNTEDTVKREATDKRKAEEKAKRTVAVKQAKSETELLQLRREEEAKRKAEEDSQRQLEEARKMAETNEKNWSATEQNVTANMEKSDYHVTTSTHARAAEDEQDRKEETTGTRRKKKPAAKKADDRKGRGGRNQRNQRGGRGKQKPQVNAPTSMQQGFDKTATVAKSDVVIGETIVVSELANKMAVKATEVIKAMMKMGAMVTINQVIDQETAALVAEEMGHKVIFRKENELEEALMSDRGETQAVESRAPVVTIMGHVDHGKTSTLDFIRKAHVASGEAGGITQHIGAYHVEIGNGMITFLDTPGHAAFTAMRARGAQATDIVVLVVAADDGVMPQTVEAIQHAKAAGVPLIVAVNKIDKDGANPDNVKNELAQYDIIPEEWGGENIFVHISAKQGTNIDGLLEAILLQSEILELTAVKEGMASGVVIESRIDKGRGPVATVLVQSGTLRKGDIVLCGLEHGRVRAMRDENGKDIESAGPSIPVEILGLSGVPAAGDEATVVRDDRKAREVALYRQGKFRDVKLARQQKSKLENMFSHMEAGEVAECNVVLKADVQGSIEAIADSLMKLSTDEVKVKVVGSGVGGITETDAVLAAASNAIILGFNVRADVPARRMIENENLDLRYYSVIYQLIDEVKAAMGGMLAPEFRQEIIGLAEVRDVFKSPKIGAIAGCMVTEGTIKRNNPIRVLRDNVVIYEGELESLRRFKDDTNEVKNGYECGIGVKNYNDVRVGDQIEVFEIIEIQRTLD.

Disordered stretches follow at residues 31-227 (KKAE…ATEQ) and 240-310 (VTTS…GFDK). 2 stretches are compositionally biased toward polar residues: residues 36-47 (NVSQTEKQSLLS) and 73-87 (STLSVAGTGGKSKSV). 3 stretches are compositionally biased toward basic and acidic residues: residues 101–173 (SALE…EKAK), 181–219 (AKSETELLQLRREEEAKRKAEEDSQRQLEEARKMAETNE), and 247–261 (RAAEDEQDRKEETTG). Residues 296-308 (PQVNAPTSMQQGF) show a composition bias toward polar residues. The tr-type G domain maps to 398-565 (SRAPVVTIMG…AILLQSEILE (168 aa)). The tract at residues 407 to 414 (GHVDHGKT) is G1. 407–414 (GHVDHGKT) provides a ligand contact to GTP. The segment at 432 to 436 (GITQH) is G2. The interval 453 to 456 (DTPG) is G3. GTP contacts are provided by residues 453-457 (DTPGH) and 507-510 (NKID). The G4 stretch occupies residues 507–510 (NKID). The G5 stretch occupies residues 543–545 (SAK).

It belongs to the TRAFAC class translation factor GTPase superfamily. Classic translation factor GTPase family. IF-2 subfamily.

Its subcellular location is the cytoplasm. Functionally, one of the essential components for the initiation of protein synthesis. Protects formylmethionyl-tRNA from spontaneous hydrolysis and promotes its binding to the 30S ribosomal subunits. Also involved in the hydrolysis of GTP during the formation of the 70S ribosomal complex. This is Translation initiation factor IF-2 from Photobacterium profundum (strain SS9).